The chain runs to 224 residues: UPF0758 protein VS_0182 (224 aa).

The disordered stretch occupies residues 1-21 (MPISKMPVESMPREKLLSRGP). Residues 102–224 (ALTSPSHTKL…VISFAERGWI (123 aa)) enclose the MPN domain. His-173, His-175, and Asp-186 together coordinate Zn(2+). Residues 173-186 (HNHPSGVAEPSQAD) carry the JAMM motif motif.

The protein belongs to the UPF0758 family.

The sequence is that of UPF0758 protein VS_0182 from Vibrio atlanticus (strain LGP32) (Vibrio splendidus (strain Mel32)).